Reading from the N-terminus, the 422-residue chain is Cysteate synthase (422 aa).

Residue K105 is modified to N6-(pyridoxal phosphate)lysine. 2 residues coordinate pyridoxal 5'-phosphate: N131 and T379.

The protein belongs to the threonine synthase family. Cysteate synthase subfamily. As to quaternary structure, homotrimer. Pyridoxal 5'-phosphate is required as a cofactor.

It carries out the reaction O-phospho-L-serine + sulfite + H(+) = L-cysteate + phosphate. Its pathway is cofactor biosynthesis; coenzyme M biosynthesis. Its function is as follows. Specifically catalyzes the beta-elimination of phosphate from L-phosphoserine and the beta-addition of sulfite to the dehydroalanine intermediate to produce L-cysteate. This chain is Cysteate synthase, found in Methanospirillum hungatei JF-1 (strain ATCC 27890 / DSM 864 / NBRC 100397 / JF-1).